The following is a 256-amino-acid chain: Pimeloyl-[acyl-carrier protein] methyl ester esterase (256 aa).

In terms of domain architecture, AB hydrolase-1 spans 15-242 (HLVLLHGWGL…AAHAPFISHP (228 aa)). Substrate is bound by residues tryptophan 22, 82–83 (SL), and 143–147 (FLALQ). Residue serine 82 is the Nucleophile of the active site. Catalysis depends on residues aspartate 207 and histidine 235. Substrate is bound at residue histidine 235.

It belongs to the AB hydrolase superfamily. Carboxylesterase BioH family. In terms of assembly, monomer.

Its subcellular location is the cytoplasm. It carries out the reaction 6-carboxyhexanoyl-[ACP] methyl ester + H2O = 6-carboxyhexanoyl-[ACP] + methanol + H(+). Its pathway is cofactor biosynthesis; biotin biosynthesis. The physiological role of BioH is to remove the methyl group introduced by BioC when the pimeloyl moiety is complete. It allows to synthesize pimeloyl-ACP via the fatty acid synthetic pathway through the hydrolysis of the ester bonds of pimeloyl-ACP esters. The protein is Pimeloyl-[acyl-carrier protein] methyl ester esterase of Salmonella dublin (strain CT_02021853).